The chain runs to 288 residues: Intermediate transcription factor 3 small subunit (288 aa).

The protein belongs to the orthopoxvirus OPG134 family. As to quaternary structure, heterodimer of a 45 kDa (A23R) and a 32 kDa (A8R) subunit to form the virus intermediate transcription factor (VITF)-3.

Acts with RNA polymerase to initiate transcription from intermediate gene promoters. In Vaccinia virus (strain Copenhagen) (VACV), this protein is Intermediate transcription factor 3 small subunit (OPG134).